Consider the following 325-residue polypeptide: Electron transfer flavoprotein subunit alpha (325 aa).

262–290 (LYIACGISGAIQHLAGMSNSKVIVAINKD) serves as a coordination point for FAD.

The protein belongs to the ETF alpha-subunit/FixB family. Heterodimer of an alpha and a beta subunit. Requires FAD as cofactor.

Functionally, the electron transfer flavoprotein serves as a specific electron acceptor for other dehydrogenases. It transfers the electrons to the main respiratory chain via ETF-ubiquinone oxidoreductase (ETF dehydrogenase). The sequence is that of Electron transfer flavoprotein subunit alpha (etfA) from Bacillus subtilis (strain 168).